The primary structure comprises 155 residues: Small ribosomal subunit protein uS7cz/uS7cy (155 aa).

It belongs to the universal ribosomal protein uS7 family. As to quaternary structure, part of the 30S ribosomal subunit.

Its subcellular location is the plastid. It localises to the chloroplast. Its function is as follows. One of the primary rRNA binding proteins, it binds directly to 16S rRNA where it nucleates assembly of the head domain of the 30S subunit. In Drimys granadensis, this protein is Small ribosomal subunit protein uS7cz/uS7cy (rps7-A).